A 134-amino-acid chain; its full sequence is UPF0102 protein Dshi_2830 (134 aa).

This sequence belongs to the UPF0102 family.

The sequence is that of UPF0102 protein Dshi_2830 from Dinoroseobacter shibae (strain DSM 16493 / NCIMB 14021 / DFL 12).